A 56-amino-acid chain; its full sequence is Large ribosomal subunit protein bL32 (56 aa).

The protein belongs to the bacterial ribosomal protein bL32 family.

This is Large ribosomal subunit protein bL32 from Brevibacillus brevis (strain 47 / JCM 6285 / NBRC 100599).